The following is a 359-amino-acid chain: DNA replication and repair protein RecF (359 aa).

Position 30 to 37 (30 to 37) interacts with ATP; that stretch reads GQNAQGKT.

The protein belongs to the RecF family.

It is found in the cytoplasm. The RecF protein is involved in DNA metabolism; it is required for DNA replication and normal SOS inducibility. RecF binds preferentially to single-stranded, linear DNA. It also seems to bind ATP. The protein is DNA replication and repair protein RecF of Lactococcus lactis subsp. cremoris (strain SK11).